Consider the following 558-residue polypeptide: Sinalpyl alcohol oxidase Nec3 (558 aa).

The first 28 residues, 1–28 (MATMAILQRTFSFILIFSIALHLKSLFA), serve as a signal peptide directing secretion. An FAD-binding site is contributed by 64 to 65 (TA). N76 carries an N-linked (GlcNAc...) asparagine glycan. Residues 83-84 (ER), V131, S135, and 139-142 (NFGF) contribute to the FAD site. N180 carries an N-linked (GlcNAc...) asparagine glycan. V247 is an FAD binding site. Residues N308, N386, and N473 are each glycosylated (N-linked (GlcNAc...) asparagine). C433 and C484 are joined by a disulfide. 492–493 (YH) is a binding site for FAD. Catalysis depends on H493, which acts as the Proton donor. Catalysis depends on N531, which acts as the Proton acceptor. 532–533 (PQ) lines the FAD pocket.

The protein belongs to the GMC oxidoreductase family. Monomer. Requires FAD as cofactor. As to expression, confined to nectaries.

It catalyses the reaction (E)-sinapyl alcohol + O2 = (E)-sinapaldehyde + H2O2. It functions in the pathway alkaloid biosynthesis. In terms of biological role, involved in the production of blood-red nectar containing the alkaloid nesocodin and that serves as a visual attractant for pollinator visitation, including vertebrates such as Phelsuma geckos. The nectar is initially acidic and pale yellow, but slowly becomes alkaline before turning into red within 24 hours. Together with NEC1 and NEC2, facilitates the condensation of sinapaldehyde ((E)-3,5-dimethoxy-4-hydroxycinnamaldehyde) and proline to form nesocodin, a pigment with a stable imine bond. Catalyzes the conversion of sinapyl alcohol to sinapaldehyde. The sequence is that of Sinalpyl alcohol oxidase Nec3 from Nesocodon mauritianus (Blue Mauritius bellflower).